The chain runs to 590 residues: Arginine--tRNA ligase (590 aa).

A 'HIGH' region motif is present at residues 126 to 136 (PNVAKEMHVGH).

The protein belongs to the class-I aminoacyl-tRNA synthetase family. In terms of assembly, monomer.

The protein resides in the cytoplasm. It catalyses the reaction tRNA(Arg) + L-arginine + ATP = L-arginyl-tRNA(Arg) + AMP + diphosphate. The polypeptide is Arginine--tRNA ligase (Streptomyces avermitilis (strain ATCC 31267 / DSM 46492 / JCM 5070 / NBRC 14893 / NCIMB 12804 / NRRL 8165 / MA-4680)).